Here is a 625-residue protein sequence, read N- to C-terminus: FMRFamide-activated amiloride-sensitive sodium channel (625 aa).

The Cytoplasmic portion of the chain corresponds to 1 to 67 (MKYTSAATKP…IVTSRDTKRK (67 aa)). Residues 68 to 89 (VIWALLVIAGFTAATLQLSLLV) form a helical membrane-spanning segment. Residues 90 to 536 (RKYLQFQVVE…LADLFADIGG (447 aa)) are Extracellular-facing. Asparagine 134, asparagine 196, asparagine 303, asparagine 349, asparagine 365, asparagine 372, and asparagine 473 each carry an N-linked (GlcNAc...) asparagine glycan. A helical membrane pass occupies residues 537-557 (TLGLWMGISVLTIMELIELVI). The Cytoplasmic segment spans residues 558–625 (RLTGLVFNSE…DFRRGVESPV (68 aa)). The segment at 570-591 (LPRGPTTVNNNNGSNNHSQSTS) is disordered. Residues 575–591 (TTVNNNNGSNNHSQSTS) are compositionally biased toward low complexity.

This sequence belongs to the amiloride-sensitive sodium channel (TC 1.A.6) family. Muscle and nervous tissue.

Its subcellular location is the membrane. FMRFamide-gated ionotropic receptor. This is FMRFamide-activated amiloride-sensitive sodium channel from Cornu aspersum (Brown garden snail).